The primary structure comprises 161 residues: Regulator of ribonuclease activity A (161 aa).

It belongs to the RraA family. Homotrimer. Binds to both RNA-binding sites in the C-terminal region of Rne and to RhlB.

It localises to the cytoplasm. Functionally, globally modulates RNA abundance by binding to RNase E (Rne) and regulating its endonucleolytic activity. Can modulate Rne action in a substrate-dependent manner by altering the composition of the degradosome. Modulates RNA-binding and helicase activities of the degradosome. The sequence is that of Regulator of ribonuclease activity A from Photobacterium profundum (strain SS9).